We begin with the raw amino-acid sequence, 318 residues long: Large ribosomal subunit protein uL10 (318 aa).

Residue Y24 is modified to Phosphotyrosine. At T59 the chain carries Phosphothreonine. K264 participates in a covalent cross-link: Glycyl lysine isopeptide (Lys-Gly) (interchain with G-Cter in ubiquitin). Residue K298 forms a Glycyl lysine isopeptide (Lys-Gly) (interchain with G-Cter in SUMO1); alternate linkage. K298 is covalently cross-linked (Glycyl lysine isopeptide (Lys-Gly) (interchain with G-Cter in SUMO2); alternate). The segment at 298-318 (KVEAKEESEESDEDMGFGLFD) is disordered. Residues 303 to 312 (EESEESDEDM) show a composition bias toward acidic residues. Phosphoserine is present on residues S305 and S308.

Belongs to the universal ribosomal protein uL10 family. P0 forms a pentameric complex by interaction with dimers of P1 and P2. Identified in a IGF2BP1-dependent mRNP granule complex containing untranslated mRNAs. Interacts with APEX1. Interacts with FMR1 isoform 6. Post-translationally, ubiquitinated at Lys-264 by RNF14 and RNF25 in response to ribosome collisions (ribosome stalling).

It localises to the nucleus. It is found in the cytoplasm. In terms of biological role, ribosomal protein P0 is the functional equivalent of E.coli protein L10. This is Large ribosomal subunit protein uL10 (RPLP0) from Oryctolagus cuniculus (Rabbit).